The sequence spans 128 residues: Small ribosomal subunit protein uS12 (128 aa).

The interval 1–25 (MPTIQQLIRRGRKTKASKTASPALE) is disordered. Asp-89 is modified (3-methylthioaspartic acid). The segment at 101-128 (SLDTSGVADRRNSRSKYGAKRPKEAAAK) is disordered.

Belongs to the universal ribosomal protein uS12 family. In terms of assembly, part of the 30S ribosomal subunit. Contacts proteins S8 and S17. May interact with IF1 in the 30S initiation complex.

In terms of biological role, with S4 and S5 plays an important role in translational accuracy. Interacts with and stabilizes bases of the 16S rRNA that are involved in tRNA selection in the A site and with the mRNA backbone. Located at the interface of the 30S and 50S subunits, it traverses the body of the 30S subunit contacting proteins on the other side and probably holding the rRNA structure together. The combined cluster of proteins S8, S12 and S17 appears to hold together the shoulder and platform of the 30S subunit. The polypeptide is Small ribosomal subunit protein uS12 (Chlorobium phaeobacteroides (strain BS1)).